A 150-amino-acid polypeptide reads, in one-letter code: Globin-1 (150 aa).

A Globin domain is found at 11–150 (ALTAAEKATI…MICILLRSSY (140 aa)). Positions 74 and 106 each coordinate heme b.

The protein belongs to the globin family. Monomer.

This chain is Globin-1, found in Petromyzon marinus (Sea lamprey).